We begin with the raw amino-acid sequence, 717 residues long: Glycine--tRNA ligase beta subunit (717 aa).

Belongs to the class-II aminoacyl-tRNA synthetase family. In terms of assembly, tetramer of two alpha and two beta subunits.

The protein resides in the cytoplasm. It carries out the reaction tRNA(Gly) + glycine + ATP = glycyl-tRNA(Gly) + AMP + diphosphate. The polypeptide is Glycine--tRNA ligase beta subunit (Agrobacterium fabrum (strain C58 / ATCC 33970) (Agrobacterium tumefaciens (strain C58))).